The primary structure comprises 636 residues: Receptor-like kinase LIP1 (636 aa).

Residues 18–57 (NAPCTTNETNDDNVEHDEFRPPVVATTKRTEEREPAEQQP) form a disordered region. Positions 74 to 352 (FRQECLLGEG…SDVMVALSFL (279 aa)) constitute a Protein kinase domain. ATP contacts are provided by residues 80–88 (LGEGGFGRV) and Lys103. Asp201 functions as the Proton acceptor in the catalytic mechanism. Residues Ser205 and Ser236 each carry the phosphoserine modification. Thr242 is modified (phosphothreonine). Tyr250 is modified (phosphotyrosine). The interval 389-636 (FCISRKDVGN…EEEHISSDHD (248 aa)) is disordered. Positions 403 to 434 (SSDSEDEEEEKEQKAEKEEESTSKKRQEQEET) form a coiled coil. Residues 413-431 (KEQKAEKEEESTSKKRQEQ) are compositionally biased toward basic and acidic residues. Positions 432–455 (EETATDSDDESDSNSEKDQEEEQS) are enriched in acidic residues. Residues 480-489 (TNATAQSLKI) show a composition bias toward polar residues. Basic and acidic residues-rich tracts occupy residues 522–531 (DSGRDHDDSS) and 554–566 (HETR…DDSP). Residues 567–576 (RNTSMRINSL) show a composition bias toward polar residues. Composition is skewed to basic and acidic residues over residues 588-603 (NHQT…KSED) and 619-636 (SLHR…SDHD).

This sequence belongs to the protein kinase superfamily. Ser/Thr protein kinase family. In terms of assembly, interacts with PRK6. In terms of processing, palmitoylated. As to expression, expressed in mature pollen and in germinating pollen tubes.

The protein resides in the cell membrane. It localises to the cytoplasm. Its function is as follows. Involved in pollen tube guidance into micropyle. Participates in perception of the ovule-secreted peptide signal LURE1. This is Receptor-like kinase LIP1 from Arabidopsis thaliana (Mouse-ear cress).